Consider the following 690-residue polypeptide: Putative glycerophosphocholine phosphodiesterase GPCPD1 homolog 1 (690 aa).

The region spanning 1 to 122 is the CBM20 domain; it reads MDQDYKAHFK…RKNITDQFGS (122 aa). The GP-PDE domain maps to 344–654; it reads MLQIGHRGMG…DRIGEDEVLK (311 aa). The segment at 670-690 is disordered; the sequence is ARSQHNSRSPSMSRRCMSTVE. The segment covering 676-690 has biased composition (low complexity); that stretch reads SRSPSMSRRCMSTVE.

The protein belongs to the glycerophosphoryl diester phosphodiesterase family.

This Caenorhabditis elegans protein is Putative glycerophosphocholine phosphodiesterase GPCPD1 homolog 1.